We begin with the raw amino-acid sequence, 207 residues long: Guanylate kinase (207 aa).

The Guanylate kinase-like domain occupies 4 to 184 (GTLYIVSAPS…ALSDLKTIIR (181 aa)). 11 to 18 (APSGAGKS) lines the ATP pocket.

The protein belongs to the guanylate kinase family.

The protein resides in the cytoplasm. The enzyme catalyses GMP + ATP = GDP + ADP. It catalyses the reaction dZMP + ATP = dZDP + ADP. It functions in the pathway purine metabolism. Functionally, essential for recycling GMP and indirectly, cGMP. In terms of biological role, (Microbial infection) Catalyzes the phosphorylation of dZMP to dZDP, when the bacterium is infected by a phage that produces the substrate for the synthesis of dZTP (2- amino-2'-deoxyadenosine 5'-triphosphate), which is then used by the phage as a DNA polymerase substrate. In Salmonella choleraesuis (strain SC-B67), this protein is Guanylate kinase.